The primary structure comprises 647 residues: DNA topoisomerase 4 subunit B (647 aa).

ATP-binding positions include Y11, N51, D78, 118–124 (GLHGVGS), and K344. Positions 391–401 (AARKARDESRN) are enriched in basic and acidic residues. The interval 391-421 (AARKARDESRNGKKNKKDKGLLSGKLTPAQS) is disordered. Residues 427–541 (NELYLVEGDS…AGHVYIALPP (115 aa)) enclose the Toprim domain. Residues E433, D506, and D508 each contribute to the Mg(2+) site.

The protein belongs to the type II topoisomerase family. ParE type 2 subfamily. As to quaternary structure, heterotetramer composed of ParC and ParE. It depends on Mg(2+) as a cofactor. The cofactor is Mn(2+). Requires Ca(2+) as cofactor.

It catalyses the reaction ATP-dependent breakage, passage and rejoining of double-stranded DNA.. Its activity is regulated as follows. Inhibited by quinolones, such as levofloxacin. In terms of biological role, topoisomerase IV is essential for chromosome segregation. It relaxes supercoiled DNA. Performs the decatenation events required during the replication of a circular DNA molecule. The chain is DNA topoisomerase 4 subunit B from Streptococcus pneumoniae serotype 4 (strain ATCC BAA-334 / TIGR4).